Reading from the N-terminus, the 645-residue chain is Pro-neuregulin-1, membrane-bound isoform (645 aa).

Positions 1–19 are excised as a propeptide; it reads MSERKEGRGKGKGKKKDRG. Residues 1-52 form a disordered region; sequence MSERKEGRGKGKGKKKDRGSRGKPAPAEGDPSPALPPRLKEMKSQESAAGSK. Residues 20–247 are Extracellular-facing; that stretch reads SRGKPAPAEG…MEAEELYQKR (228 aa). The region spanning 37 to 128 is the Ig-like C2-type domain; the sequence is PRLKEMKSQE…GNDSASANIT (92 aa). Cysteines 57 and 112 form a disulfide. The segment covering 139-164 has biased composition (polar residues); the sequence is MSASTERPYVSSESPIRISVSTEGAN. Residues 139 to 175 are disordered; sequence MSASTERPYVSSESPIRISVSTEGANTSSSTSTSTTG. A compositionally biased stretch (low complexity) spans 165-175; it reads TSSSTSTSTTG. The region spanning 178–222 is the EGF-like domain; sequence HLIKCAEKEKTFCVNGGECFMVKDLSNPSRYLCKCPNEFTGDRCQ. 3 disulfide bridges follow: Cys-182-Cys-196, Cys-190-Cys-210, and Cys-212-Cys-221. The helical transmembrane segment at 248-268 threads the bilayer; the sequence is VLTITGICIALLVVGIMCVVA. Topologically, residues 269 to 645 are cytoplasmic; that stretch reads YCKTKKQRQK…VIANQDPIAV (377 aa). Positions 340–355 are enriched in low complexity; that stretch reads SHYTSTAHHSTTVTQT. Disordered regions lie at residues 340–364, 380–406, 433–463, and 531–593; these read SHYTSTAHHSTTVTQTPSHSWSNGH, SVENSRHSSPAGGPRGRLHGLGGPREC, MTTPARMSPVDFHTPSSPKSPPSEMSPPVSS, and ETTQ…DTPF. Gly residues predominate over residues 392-402; it reads GPRGRLHGLGG. Positions 547-557 are enriched in basic residues; that stretch reads TNSRRAKRTKP. The span at 568-579 shows a compositional bias: low complexity; that stretch reads DSNPSSVSSNSE.

This sequence belongs to the neuregulin family. The cytoplasmic domain interacts with the LIM domain region of LIMK1. Forms a ternary complex with ERBB3 and ITGAV:ITGB3 or ITGA6:ITGB4. Interacts with NRDC and BACE1. Post-translationally, proteolytic cleavage close to the plasma membrane on the external face leads to the release of the soluble growth factor form. N- and O-glycosylated. Extensive glycosylation precedes the proteolytic cleavage.

It is found in the cell membrane. The protein localises to the secreted. Its function is as follows. Direct ligand for ERBB3 and ERBB4 tyrosine kinase receptors. Concomitantly recruits ERBB1 and ERBB2 coreceptors, resulting in ligand-stimulated tyrosine phosphorylation and activation of the ERBB receptors. Perform diverse functions such as inducing growth and differentiation of epithelial, glial, neuronal, and skeletal muscle cells; inducing expression of acetylcholine receptor in synaptic vesicles during the formation of the neuromuscular junction; stimulating lobuloalveolar budding and milk production in the mammary gland and inducing differentiation of mammary tumor cells; stimulating Schwann cell proliferation; implication in the development of the myocardium such as trabeculation of the developing heart. Binds to ERBB4 and ERBB3. Acts as a ligand for integrins and binds (via EGF domain) to integrins ITGAV:ITGB3 or ITGA6:ITGB4. Its binding to integrins and subsequent ternary complex formation with integrins and ERRB3 are essential for NRG1-ERBB signaling. Induces the phosphorylation and activation of MAPK3/ERK1, MAPK1/ERK2 and AKT1, and ligand-dependent ERBB4 endocytosis is essential for the NRG1-mediated activation of these kinases in neurons. The sequence is that of Pro-neuregulin-1, membrane-bound isoform from Mus musculus (Mouse).